We begin with the raw amino-acid sequence, 728 residues long: MKELFQKIWQNELQFLNFDAKFQDKSKLDTAECAIILSVNKDNYERYFLLKEFQELCKKIDLRVDIFSMQNAQICILNLFKSGFISKQDLLKALKILEKISKNTEIFDFILQEKVQSIDQKALFQNDFKELNTINLELQKLSFDENLKSRLQKTLEKFQNLEFNIAITGVMNAGKSSLLNALLKEDFLGVSNIPETANLTVLSYGKSEEAKIYFWDKKEWQNILESSHFNADLKEFIDKLDKSVNIEDFIKDKPLIQNIALCELKNFSSAKNKISALIKKIEIKSHLEFLKNNISIVDTPGLDDVVVQREIVTNEYLRESDFLIHLMNASQSLTQKDADFLVHCLLNSRLSKFLIVLTKADLLSKKDLEEVIVYTKESLKSRLVDLDENLVEKIDFLCVSAKMASDFYKGLASKESLQKSGMQEFENYLFNELYAGEKSKIALRAYKKELHLELKNILSEYEMQNRLIKENKQGVSEENQKLLLELQKQNTLLKEAQDEISNSIAKLKNIDSGIDNLVLLLAKKLKERLIDEFKYLKNNAQKLNLSRILNIVDITTKDGINDILREIKFENIKKIEELKTNLSLKYDFLKDDFDNGFEGFKDGISKNIDSIFQSEKFALLRLKIEKLSNLKSDLYELETNLDTVIFDTFKEFKMSEILNSLNINGAFFEFLNDKLKHYEKNQKSKLESLEKVLQSLKNQDANILNSFEENLEKIEKLKQLEMGLLNAD.

Positions 1–119 (MKELFQKIWQ…ILQEKVQSID (119 aa)) are assembly domain, required for tetramerization. The Dynamin-type G domain maps to 159–442 (QNLEFNIAIT…LYAGEKSKIA (284 aa)). The interval 169-176 (GVMNAGKS) is G1 motif. Position 171 to 177 (171 to 177 (MNAGKSS)) interacts with GDP. Positions 195 to 196 (ET) are G2 motif. Residues 298–301 (DTPG) form a G3 motif region. The interval 358–361 (TKAD) is G4 motif. Lys-359 serves as a coordination point for GDP. Residue Glu-388 is a region of interest, G5 motif. Position 400-402 (400-402 (SAK)) interacts with GDP. A required for liposome binding but not for tetramerization region spans residues 470-695 (ENKQGVSEEN…LESLEKVLQS (226 aa)).

Belongs to the TRAFAC class dynamin-like GTPase superfamily. Dynamin/Fzo/YdjA family. As to quaternary structure, forms a 2:2 heterotetramer with DLP1. DLP2 forms a central back-to-back dimer flanked on each side by a DLP1 subunit. In the crystal structures the 2 DLP1 subunits are in very different conformations.

The protein resides in the cytoplasm. Its subcellular location is the cytosol. It catalyses the reaction GTP + H2O = GDP + phosphate + H(+). Functionally, the heterotetrameric DLP1(2)-DLP2(2) complex tethers liposomes and may mediate their fusion. Initial binding is probably mediated by DLP1, while DLP2 couples DLP1 subunits and increases the effective reach of the complex up to 45 nm. The role of the nucleotide is unknown. This subunit alone weakly binds to liposomes; GTP, GDP, GMPPCP and GMPPNP do not change heterotetramer binding. Tetramerization is required for GTPase activity, suggesting the GTPase domains (dynamin-type G) from DLP1 and DLP2 must dimerize to reconstitute the GTPase active site. In Campylobacter jejuni subsp. jejuni serotype O:23/36 (strain 81-176), this protein is Dynamin-like protein 1.